Consider the following 295-residue polypeptide: Protease HtpX (295 aa).

Helical transmembrane passes span 4 to 24 (ILLFVATNLAVVLVASITLSL) and 41 to 61 (GQLLVFCAVFGFAGSLVSLFI). Position 147 (H147) interacts with Zn(2+). The active site involves E148. H151 lines the Zn(2+) pocket. Helical transmembrane passes span 158 to 178 (VTMALVQGVVNTFVMFFARII) and 198 to 218 (FVATIVAELVLGILASIIVMW). E224 is a binding site for Zn(2+).

The protein belongs to the peptidase M48B family. Requires Zn(2+) as cofactor.

The protein resides in the cell inner membrane. In Pseudomonas entomophila (strain L48), this protein is Protease HtpX.